We begin with the raw amino-acid sequence, 226 residues long: Large ribosomal subunit protein uL3 (226 aa).

The segment at 135–158 is disordered; sequence MSSQRASHGNSRSHNVPGSIGMAQ. Over residues 137–150 the composition is skewed to polar residues; that stretch reads SQRASHGNSRSHNV. Residue Q158 is modified to N5-methylglutamine.

This sequence belongs to the universal ribosomal protein uL3 family. Part of the 50S ribosomal subunit. Forms a cluster with proteins L14 and L19. Methylated by PrmB.

In terms of biological role, one of the primary rRNA binding proteins, it binds directly near the 3'-end of the 23S rRNA, where it nucleates assembly of the 50S subunit. In Polaromonas naphthalenivorans (strain CJ2), this protein is Large ribosomal subunit protein uL3.